The primary structure comprises 72 residues: UPF0270 protein YheU (72 aa).

It belongs to the UPF0270 family.

The sequence is that of UPF0270 protein YheU from Salmonella agona (strain SL483).